The sequence spans 360 residues: Flavin-dependent trigonelline monooxygenase, oxygenase component (360 aa).

Belongs to the bacterial luciferase oxidoreductase family. As to quaternary structure, homodimer. The trigonelline monooxygenase is composed of a reductase component TgnA and an oxygenase component TgnB.

The catalysed reaction is N-methylnicotinate + FMNH2 + O2 = (Z)-2-((N-methylformamido)methylene)-5-hydroxybutanolactone + FMN + H(+). It carries out the reaction N-methylnicotinate + FADH2 + O2 = (Z)-2-((N-methylformamido)methylene)-5-hydroxybutanolactone + FAD + H(+). Involved in the degradation of the pyridine ring of trigonelline (TG; N-methylnicotinate) into succinate and methylamine as carbon and nitrogen sources, respectively. Catalyzes the insertion of two oxygens, followed by a ring cleavage of trigonelline to yield (Z)-2-((N-methylformamido)methylene)-5-hydroxybutyrolactone (MFMB). It is able to use reduced FMN or FAD. The protein is Flavin-dependent trigonelline monooxygenase, oxygenase component of Acinetobacter baylyi (strain ATCC 33305 / BD413 / ADP1).